The sequence spans 412 residues: Tyrosine--tRNA ligase (412 aa).

A 'HIGH' region motif is present at residues 50 to 59 (PTGTDIHLGH). The 'KMSKS' region motif lies at 244–248 (KMSKS). Position 247 (Lys-247) interacts with ATP. Positions 348–411 (VKFFYLLSSL…IGKKIIKRFE (64 aa)) constitute an S4 RNA-binding domain.

Belongs to the class-I aminoacyl-tRNA synthetase family. TyrS type 2 subfamily. As to quaternary structure, homodimer.

The protein resides in the cytoplasm. The enzyme catalyses tRNA(Tyr) + L-tyrosine + ATP = L-tyrosyl-tRNA(Tyr) + AMP + diphosphate + H(+). In terms of biological role, catalyzes the attachment of tyrosine to tRNA(Tyr) in a two-step reaction: tyrosine is first activated by ATP to form Tyr-AMP and then transferred to the acceptor end of tRNA(Tyr). This chain is Tyrosine--tRNA ligase, found in Prochlorococcus marinus (strain MIT 9312).